Reading from the N-terminus, the 224-residue chain is Small ribosomal subunit protein uS5 (224 aa).

The segment at 1–38 (MAEQSAGGQGAPEGRDSRDSREGRGRRDGGRGGRDSDK) is disordered. Over residues 13-38 (EGRDSRDSREGRGRRDGGRGGRDSDK) the composition is skewed to basic and acidic residues. Positions 41–104 (YLERVVAINR…EEARKGFFRV (64 aa)) constitute an S5 DRBM domain.

This sequence belongs to the universal ribosomal protein uS5 family. In terms of assembly, part of the 30S ribosomal subunit. Contacts proteins S4 and S8.

Its function is as follows. With S4 and S12 plays an important role in translational accuracy. Located at the back of the 30S subunit body where it stabilizes the conformation of the head with respect to the body. This Mycobacterium ulcerans (strain Agy99) protein is Small ribosomal subunit protein uS5.